Reading from the N-terminus, the 183-residue chain is ATP synthase subunit delta (183 aa).

It belongs to the ATPase delta chain family. F-type ATPases have 2 components, F(1) - the catalytic core - and F(0) - the membrane proton channel. F(1) has five subunits: alpha(3), beta(3), gamma(1), delta(1), epsilon(1). F(0) has three main subunits: a(1), b(2) and c(10-14). The alpha and beta chains form an alternating ring which encloses part of the gamma chain. F(1) is attached to F(0) by a central stalk formed by the gamma and epsilon chains, while a peripheral stalk is formed by the delta and b chains.

It localises to the cell inner membrane. In terms of biological role, f(1)F(0) ATP synthase produces ATP from ADP in the presence of a proton or sodium gradient. F-type ATPases consist of two structural domains, F(1) containing the extramembraneous catalytic core and F(0) containing the membrane proton channel, linked together by a central stalk and a peripheral stalk. During catalysis, ATP synthesis in the catalytic domain of F(1) is coupled via a rotary mechanism of the central stalk subunits to proton translocation. This protein is part of the stalk that links CF(0) to CF(1). It either transmits conformational changes from CF(0) to CF(1) or is implicated in proton conduction. The protein is ATP synthase subunit delta of Ruthia magnifica subsp. Calyptogena magnifica.